Consider the following 577-residue polypeptide: Serine/threonine-protein kinase AGC1-5 (577 aa).

A compositionally biased stretch (polar residues) spans 1 to 12; that stretch reads MDLASKKNTANV. Residues 1–151 form a disordered region; sequence MDLASKKNTA…DYAYGDNLVG (151 aa). Residues 44-55 show a composition bias toward basic and acidic residues; it reads PHFDPKKMDPLV. Polar residues-rich tracts occupy residues 69–87 and 110–120; these read TRGT…SSDG and LTTSETYSPSA. Positions 185-509 constitute a Protein kinase domain; sequence FRLLKRLGYG…ATEIKQHPFF (325 aa). Residues 191–199 and Lys214 contribute to the ATP site; that span reads LGYGDIGSV. Residue Asp310 is the Proton acceptor of the active site. The AGC-kinase C-terminal domain maps to 510–577; the sequence is EGVNWALVRS…DTAYIDFEYF (68 aa).

Belongs to the protein kinase superfamily. AGC Ser/Thr protein kinase family. Interacts with PDPK1/PDK1. In terms of processing, autophosphorylated and phosphorylated by PDPK1/PDK1. Specifically expressed in pollen grains.

It carries out the reaction L-seryl-[protein] + ATP = O-phospho-L-seryl-[protein] + ADP + H(+). It catalyses the reaction L-threonyl-[protein] + ATP = O-phospho-L-threonyl-[protein] + ADP + H(+). With respect to regulation, activated by PDPK1/PDK1. Its function is as follows. Functions redudantly with AGC1-7 as signaling component in the pollen tube. Required for polarized growth of pollen tubes. This Arabidopsis thaliana (Mouse-ear cress) protein is Serine/threonine-protein kinase AGC1-5.